We begin with the raw amino-acid sequence, 447 residues long: GTPase Der (447 aa).

2 consecutive EngA-type G domains span residues 4-165 and 180-357; these read KIIT…SIKE and LQIV…KIWN. GTP contacts are provided by residues 10–17, 57–61, 119–122, 186–193, 233–237, and 298–301; these read GRPNVGKS, DTPGL, NKCE, GRPNAGKS, DTAGL, and NKWD. A KH-like domain is found at 358–443; it reads KKITTGKLNE…PIRFTYVKNK (86 aa).

It belongs to the TRAFAC class TrmE-Era-EngA-EngB-Septin-like GTPase superfamily. EngA (Der) GTPase family. In terms of assembly, associates with the 50S ribosomal subunit.

Functionally, GTPase that plays an essential role in the late steps of ribosome biogenesis. This chain is GTPase Der, found in Rickettsia typhi (strain ATCC VR-144 / Wilmington).